The chain runs to 153 residues: NAD(P)H-quinone oxidoreductase subunit N (153 aa).

The protein belongs to the complex I NdhN subunit family. NDH-1 can be composed of about 15 different subunits; different subcomplexes with different compositions have been identified which probably have different functions.

It localises to the cellular thylakoid membrane. It carries out the reaction a plastoquinone + NADH + (n+1) H(+)(in) = a plastoquinol + NAD(+) + n H(+)(out). It catalyses the reaction a plastoquinone + NADPH + (n+1) H(+)(in) = a plastoquinol + NADP(+) + n H(+)(out). NDH-1 shuttles electrons from an unknown electron donor, via FMN and iron-sulfur (Fe-S) centers, to quinones in the respiratory and/or the photosynthetic chain. The immediate electron acceptor for the enzyme in this species is believed to be plastoquinone. Couples the redox reaction to proton translocation, and thus conserves the redox energy in a proton gradient. Cyanobacterial NDH-1 also plays a role in inorganic carbon-concentration. The polypeptide is NAD(P)H-quinone oxidoreductase subunit N (Prochlorococcus marinus (strain MIT 9211)).